Consider the following 1410-residue polypeptide: DNA-directed RNA polymerase subunit beta' (1410 aa).

Cys-69, Cys-71, Cys-84, and Cys-87 together coordinate Zn(2+). 3 residues coordinate Mg(2+): Asp-461, Asp-463, and Asp-465. Residues Cys-810, Cys-884, Cys-891, and Cys-894 each coordinate Zn(2+).

It belongs to the RNA polymerase beta' chain family. The RNAP catalytic core consists of 2 alpha, 1 beta, 1 beta' and 1 omega subunit. When a sigma factor is associated with the core the holoenzyme is formed, which can initiate transcription. Mg(2+) serves as cofactor. It depends on Zn(2+) as a cofactor.

It carries out the reaction RNA(n) + a ribonucleoside 5'-triphosphate = RNA(n+1) + diphosphate. DNA-dependent RNA polymerase catalyzes the transcription of DNA into RNA using the four ribonucleoside triphosphates as substrates. In Ehrlichia chaffeensis (strain ATCC CRL-10679 / Arkansas), this protein is DNA-directed RNA polymerase subunit beta'.